A 381-amino-acid polypeptide reads, in one-letter code: Peptidoglycan glycosyltransferase MrdB (381 aa).

A run of 10 helical transmembrane segments spans residues 11 to 31, 40 to 60, 66 to 86, 102 to 122, 132 to 152, 156 to 176, 180 to 200, 263 to 283, 297 to 317, and 328 to 348; these read FDLLPFVFIIPLLVVSFLLIF, KQGVYYAIGFLLFWVVFFIPF, WLFALYWACVILLALVDFMGS, ITLQPSEPVKIAILLLLAHLI, YDWGMFLKLSFYICLPAALIL, DLGTALIVLIMGFGILLIVGL, VWLPLLIALIVASPIAYHFLH, FGFLGAILLFAIYIGLSLHLF, IVALGISILIFVYSSVNIAMT, and LPLFSYGGSSFITFMILFAIL.

It belongs to the SEDS family. MrdB/RodA subfamily.

It localises to the cell inner membrane. The catalysed reaction is [GlcNAc-(1-&gt;4)-Mur2Ac(oyl-L-Ala-gamma-D-Glu-L-Lys-D-Ala-D-Ala)](n)-di-trans,octa-cis-undecaprenyl diphosphate + beta-D-GlcNAc-(1-&gt;4)-Mur2Ac(oyl-L-Ala-gamma-D-Glu-L-Lys-D-Ala-D-Ala)-di-trans,octa-cis-undecaprenyl diphosphate = [GlcNAc-(1-&gt;4)-Mur2Ac(oyl-L-Ala-gamma-D-Glu-L-Lys-D-Ala-D-Ala)](n+1)-di-trans,octa-cis-undecaprenyl diphosphate + di-trans,octa-cis-undecaprenyl diphosphate + H(+). The protein operates within cell wall biogenesis; peptidoglycan biosynthesis. In terms of biological role, peptidoglycan polymerase that is essential for cell wall elongation. The chain is Peptidoglycan glycosyltransferase MrdB from Helicobacter pylori (strain J99 / ATCC 700824) (Campylobacter pylori J99).